A 722-amino-acid chain; its full sequence is Dipeptidyl aminopeptidase BII (722 aa).

Positions 1–24 (MRPNLLAAAIAVPLSLLAAQIAQA) are cleaved as a signal peptide. Disulfide bonds link Cys-70/Cys-87 and Cys-166/Cys-174. His-86 (charge relay system) is an active-site residue. 215–216 (NW) contributes to the substrate binding site. Residue Asp-224 is the Charge relay system of the active site. Substrate is bound by residues Asn-330, 655–657 (GNS), and 673–674 (FD). The Charge relay system role is filled by Ser-657.

It belongs to the peptidase S46 family. In terms of assembly, homodimer.

With respect to regulation, completely inhibited by the serine protease inhibitor diisopropyl fluorophosphate (DFP) and potently inhibited by 0.5 mM ZnCl(2), 10 mM o-phenanthlorine, phenylmethanesulfonyl fluoride (PMSF) and N-tosyl-L-phenyl-alanyl chloromethyl ketone (TPCK), but not by N-tosyl-L-lysyl chloromethyl ketone (TLCK). Activity is not affected significantly by protease inhibitors, such as chymostatin, leupeptin, N-ethylmaleimide (NEM), iodoacetate (IAA), L-trans-epoxysuccinyl-leucylamido(4-guanido)butane (E64) and pepstatin A or by CoCl(2), CaCl(2) and EDTA. In terms of biological role, exopeptidase that catalyzes the removal of dipeptide units (NH2-P2-P1-) from the free amino termini of oligopeptides and small proteins. Peptide digestion is sequential and substrate recognition is non-specific, with the exception that Pro is not suitable as a P1 residue. Removes many residues of bioactive oligopeptides such as angiotensin I and neuromedin N and also cleaves oxidized insulin B chain. Able to hydrolyze an X-Pro bond, an imido bond. No endopeptidase activity. May play a physiological role in feeding. This chain is Dipeptidyl aminopeptidase BII, found in Pseudoxanthomonas mexicana.